A 149-amino-acid polypeptide reads, in one-letter code: MAKEDTTQALYKEAFNLFDKDKDGKITIQELGIVMRSVGSNPTQQELKDIAKEIDDGSGLVDFSKFSSLMTRKMKYSDSEADIKQAFKVFDKKGNGYANIQDLKHTLTSIGEKLTKEEFDNMLKDAKTVDGQIHVDEFVRVIKSSKSFN.

EF-hand domains lie at 6 to 41, 42 to 76, 78 to 113, and 113 to 148; these read TTQALYKEAFNLFDKDKDGKITIQELGIVMRSVGSN, PTQQELKDIAKEIDDGSGLVDFSKFSSLMTRKMKY, DSEADIKQAFKVFDKKGNGYANIQDLKHTLTSIGEK, and KLTKEEFDNMLKDAKTVDGQIHVDEFVRVIKSSKSF. Ca(2+) is bound by residues Asp-19, Asp-21, Asp-23, Lys-25, and Glu-30.

This sequence belongs to the calmodulin family.

It localises to the contractile vacuole. Its function is as follows. Mediates the control of a large number of enzymes, ion channels and other proteins by Ca(2+) ions. Among the enzymes to be stimulated by the calmodulin-Ca(2+) complex are a number of protein kinases and phosphatases. This is Calmodulin-like protein (calB) from Dictyostelium discoideum (Social amoeba).